Consider the following 194-residue polypeptide: Large ribosomal subunit protein bL25 (194 aa).

It belongs to the bacterial ribosomal protein bL25 family. CTC subfamily. In terms of assembly, part of the 50S ribosomal subunit; part of the 5S rRNA/L5/L18/L25 subcomplex. Contacts the 5S rRNA. Binds to the 5S rRNA independently of L5 and L18.

In terms of biological role, this is one of the proteins that binds to the 5S RNA in the ribosome where it forms part of the central protuberance. This chain is Large ribosomal subunit protein bL25, found in Geotalea uraniireducens (strain Rf4) (Geobacter uraniireducens).